A 607-amino-acid polypeptide reads, in one-letter code: Thymidine kinase (607 aa).

Disordered regions lie at residues 1-160 (MAGF…ADST) and 180-215 (DDKS…PSGL). Over residues 17–32 (KCQEDESPENERHENF) the composition is skewed to basic and acidic residues. Composition is skewed to polar residues over residues 88 to 106 (AAVT…TSCP), 148 to 160 (RKTS…ADST), and 194 to 203 (RRPSSHSALK). Residue 291 to 298 (GAPGVGKT) coordinates ATP. Glu-317 (proton acceptor) is an active-site residue. Residue Gln-355 coordinates substrate. Arg-445 serves as a coordination point for ATP. A substrate-binding site is contributed by Arg-451.

Belongs to the herpesviridae thymidine kinase family. In terms of assembly, homodimer.

The protein resides in the virion tegument. It localises to the host nucleus. It catalyses the reaction thymidine + ATP = dTMP + ADP + H(+). Its function is as follows. Catalyzes the transfer of the gamma-phospho group of ATP to thymidine to generate dTMP in the salvage pathway of pyrimidine synthesis. The dTMP serves as a substrate for DNA polymerase during viral DNA replication. Allows the virus to be reactivated and to grow in non-proliferative cells lacking a high concentration of phosphorylated nucleic acid precursors. The protein is Thymidine kinase of Homo sapiens (Human).